A 461-amino-acid polypeptide reads, in one-letter code: Ufm1-specific protease 2 (461 aa).

Active-site residues include Cys-294, Asp-418, and His-420.

The protein belongs to the peptidase C78 family. Expressed at high level in brain, kidney, stomach, skeletal muscle, liver, pancreas, spleen and testis.

The protein resides in the endoplasmic reticulum. It localises to the cytoplasm. Its subcellular location is the nucleus. Functionally, thiol-dependent isopeptidase that specifically cleaves UFM1, a ubiquitin-like modifier protein, from conjugated proteins, such as CD274/PD-L1, CYB5R3, DDRGK1, MRE11, RPL26/uL24, TRIP4 and RPL26/uL24. While it is also able to mediate the processing of UFM1 precursors, a prerequisite for conjugation reactions, UFSP2 mainly acts as a protein deUFMylase that mediates deconjugation of UFM1 from target proteins. Mediates deUFMylation of RPL26/uL24, a critical step to release the UFM1 ribosome E3 ligase (UREL) complex during the recycling of 60S ribosome subunits from the endoplasmic reticulum. Catalyzes deUFMylation of TRIP4, regulating intracellular nuclear receptors transactivation and thereby regulate cell proliferation and differentiation. The chain is Ufm1-specific protease 2 from Mus musculus (Mouse).